The chain runs to 409 residues: MHWGVGFASSRPCVVDLSWNQSISFFGWWAGSEEPFSFYGDIIAFPLQDYGGIMAGLGSDPWWKKTLYLTGGALLAAAAYLLHELLVIRKQQELDSKDAIILHQFARPNNGVPSLSPFCLKMETYLRMADLPYQNYFGGKLSAQGKMPWIEYNNEKVSGTEFIIDFLEEKLGVNLNKSLGPHERAVSRAVTKMVEEHFYWTLAYCQWVDNLNETRKMLSLSGGGPFSNLLRWVVCHITKGIVKREMHGHGIGRFSEEEIYMLMEKDMRSLAGLLGDKKYIMGPKLSTLDATVFGHLAQAMWTLPGTRPERLIKGELINLAMYCERIRRKFWPEWHHDDDNTIYESEESSEGSKTHTPMLDFSFYSRTETFEDEGAENSFSRTPDTDFTGHSLFDSDVEMDDYTDHEQCK.

The helical transmembrane segment at 68–88 threads the bilayer; the sequence is YLTGGALLAAAAYLLHELLVI. Positions 372 to 393 are disordered; that stretch reads DEGAENSFSRTPDTDFTGHSLF.

Belongs to the FAX family.

The protein localises to the membrane. Functionally, may play a role in axonal development. The sequence is that of Failed axon connections homolog (Faxc) from Mus musculus (Mouse).